Consider the following 1024-residue polypeptide: Beta-galactosidase (1024 aa).

Positions 103 and 202 each coordinate substrate. Aspartate 202 serves as a coordination point for Na(+). 3 residues coordinate Mg(2+): glutamate 417, histidine 419, and glutamate 462. Substrate is bound by residues glutamate 462 and 538 to 541 (EYAH). The active-site Proton donor is the glutamate 462. Glutamate 538 (nucleophile) is an active-site residue. Asparagine 598 provides a ligand contact to Mg(2+). Phenylalanine 602 and asparagine 605 together coordinate Na(+). 2 residues coordinate substrate: asparagine 605 and tryptophan 1000.

It belongs to the glycosyl hydrolase 2 family. As to quaternary structure, homotetramer. Mg(2+) serves as cofactor. It depends on Na(+) as a cofactor.

It catalyses the reaction Hydrolysis of terminal non-reducing beta-D-galactose residues in beta-D-galactosides.. In Escherichia coli O157:H7, this protein is Beta-galactosidase.